Here is a 142-residue protein sequence, read N- to C-terminus: Large ribosomal subunit protein uL13 (142 aa).

This sequence belongs to the universal ribosomal protein uL13 family. As to quaternary structure, part of the 50S ribosomal subunit.

Its function is as follows. This protein is one of the early assembly proteins of the 50S ribosomal subunit, although it is not seen to bind rRNA by itself. It is important during the early stages of 50S assembly. This Alteromonas mediterranea (strain DSM 17117 / CIP 110805 / LMG 28347 / Deep ecotype) protein is Large ribosomal subunit protein uL13.